A 154-amino-acid chain; its full sequence is Transcriptional repressor NrdR (154 aa).

A zinc finger lies at 3–34 (CPTCKYNGTRVVDSRPADDGNSIRRRRECEKC). The ATP-cone domain maps to 49-139 (LIVVKKDGAR…VYRQFKDISV (91 aa)).

It belongs to the NrdR family. Zn(2+) is required as a cofactor.

Functionally, negatively regulates transcription of bacterial ribonucleotide reductase nrd genes and operons by binding to NrdR-boxes. This chain is Transcriptional repressor NrdR, found in Listeria welshimeri serovar 6b (strain ATCC 35897 / DSM 20650 / CCUG 15529 / CIP 8149 / NCTC 11857 / SLCC 5334 / V8).